Here is a 252-residue protein sequence, read N- to C-terminus: Imidazole glycerol phosphate synthase subunit HisF (252 aa).

Residues Asp11 and Asp130 contribute to the active site.

Belongs to the HisA/HisF family. In terms of assembly, heterodimer of HisH and HisF.

The protein resides in the cytoplasm. The catalysed reaction is 5-[(5-phospho-1-deoxy-D-ribulos-1-ylimino)methylamino]-1-(5-phospho-beta-D-ribosyl)imidazole-4-carboxamide + L-glutamine = D-erythro-1-(imidazol-4-yl)glycerol 3-phosphate + 5-amino-1-(5-phospho-beta-D-ribosyl)imidazole-4-carboxamide + L-glutamate + H(+). It functions in the pathway amino-acid biosynthesis; L-histidine biosynthesis; L-histidine from 5-phospho-alpha-D-ribose 1-diphosphate: step 5/9. IGPS catalyzes the conversion of PRFAR and glutamine to IGP, AICAR and glutamate. The HisF subunit catalyzes the cyclization activity that produces IGP and AICAR from PRFAR using the ammonia provided by the HisH subunit. The chain is Imidazole glycerol phosphate synthase subunit HisF from Staphylococcus aureus (strain Mu3 / ATCC 700698).